A 683-amino-acid chain; its full sequence is DNA polymerase alpha-associated DNA helicase A (683 aa).

An ATP-binding site is contributed by 229 to 236; it reads GPPGTGKT.

The protein belongs to the DNA2/NAM7 helicase family. Associates with the hexameric DNA polymerase alpha.

The protein localises to the cytoplasm. It localises to the nucleus. The enzyme catalyses ATP + H2O = ADP + phosphate + H(+). DNA polymerase alpha-associated DNA helicase which may be involved in DNA replication. This is DNA polymerase alpha-associated DNA helicase A (HCS1) from Saccharomyces cerevisiae (strain ATCC 204508 / S288c) (Baker's yeast).